The chain runs to 169 residues: Cytochrome c oxidase subunit 4 isoform 1, mitochondrial (169 aa).

The transit peptide at Met-1 to Arg-22 directs the protein to the mitochondrion. The Mitochondrial matrix segment spans residues Ala-23–Asn-98. Lys-29 carries the post-translational modification N6-acetyllysine; alternate. N6-succinyllysine; alternate is present on Lys-29. Lys-53 bears the N6-acetyllysine mark. Phosphoserine is present on residues Ser-56 and Ser-58. Lys-60 is subject to N6-acetyllysine; alternate. Position 60 is an N6-succinyllysine; alternate (Lys-60). At Lys-67 the chain carries N6-acetyllysine. A helical membrane pass occupies residues Glu-99–Tyr-124. At Val-125–Lys-169 the chain is on the mitochondrial intermembrane side.

This sequence belongs to the cytochrome c oxidase IV family. As to quaternary structure, component of the cytochrome c oxidase (complex IV, CIV), a multisubunit enzyme composed of 14 subunits. The complex is composed of a catalytic core of 3 subunits MT-CO1, MT-CO2 and MT-CO3, encoded in the mitochondrial DNA, and 11 supernumerary subunits COX4I, COX5A, COX5B, COX6A, COX6B, COX6C, COX7A, COX7B, COX7C, COX8 and NDUFA4, which are encoded in the nuclear genome. The complex exists as a monomer or a dimer and forms supercomplexes (SCs) in the inner mitochondrial membrane with NADH-ubiquinone oxidoreductase (complex I, CI) and ubiquinol-cytochrome c oxidoreductase (cytochrome b-c1 complex, complex III, CIII), resulting in different assemblies (supercomplex SCI(1)III(2)IV(1) and megacomplex MCI(2)III(2)IV(2)). Interacts with PHB2; the interaction decreases in absence of SPHK2. Interacts with AFG1L. Interacts with ABCB7; this interaction allows the regulation of cellular iron homeostasis and cellular reactive oxygen species (ROS) levels in cardiomyocytes. Interacts with FLVCR2; this interaction occurs in the absence of heme and is disrupted upon heme binding. Interacts with IRGC.

Its subcellular location is the mitochondrion inner membrane. It functions in the pathway energy metabolism; oxidative phosphorylation. Component of the cytochrome c oxidase, the last enzyme in the mitochondrial electron transport chain which drives oxidative phosphorylation. The respiratory chain contains 3 multisubunit complexes succinate dehydrogenase (complex II, CII), ubiquinol-cytochrome c oxidoreductase (cytochrome b-c1 complex, complex III, CIII) and cytochrome c oxidase (complex IV, CIV), that cooperate to transfer electrons derived from NADH and succinate to molecular oxygen, creating an electrochemical gradient over the inner membrane that drives transmembrane transport and the ATP synthase. Cytochrome c oxidase is the component of the respiratory chain that catalyzes the reduction of oxygen to water. Electrons originating from reduced cytochrome c in the intermembrane space (IMS) are transferred via the dinuclear copper A center (CU(A)) of subunit 2 and heme A of subunit 1 to the active site in subunit 1, a binuclear center (BNC) formed by heme A3 and copper B (CU(B)). The BNC reduces molecular oxygen to 2 water molecules using 4 electrons from cytochrome c in the IMS and 4 protons from the mitochondrial matrix. The polypeptide is Cytochrome c oxidase subunit 4 isoform 1, mitochondrial (Cox4i1) (Rattus norvegicus (Rat)).